A 2282-amino-acid polypeptide reads, in one-letter code: Acetyl-CoA carboxylase (2282 aa).

Residues 16–515 enclose the Biotin carboxylation domain; sequence NIEKILIANN…HTGWLDQLIS (500 aa). In terms of domain architecture, ATP-grasp spans 170–360; the sequence is YSECNGVPSE…LPATQLQIAM (191 aa). 196-253 is a binding site for ATP; sequence AQRVGFPAMIKASEGGGGKGIRKVTSMEDLESSFRQVQNEVPGSPIFFMKLVSNARHL. Residues glutamate 319, glutamate 331, and asparagine 333 each coordinate Mn(2+). Arginine 335 is a catalytic residue. The Biotinyl-binding domain occupies 646-720; it reads FSQEYDPSIL…APGAIIANLE (75 aa). Lysine 687 carries the post-translational modification N6-biotinyllysine. Residues 1109-1129 are compositionally biased toward low complexity; the sequence is GSNSGSPTYGSPLIRSISSSG. The segment at 1109–1141 is disordered; the sequence is GSNSGSPTYGSPLIRSISSSGGSSGGSGFQISP. A CoA carboxyltransferase N-terminal domain is found at 1495–1851; the sequence is PYPIMDAVQR…SGGEMVPIIS (357 aa). The interval 1495–2178 is carboxyltransferase; it reads PYPIMDAVQR…EEDKLKLIDK (684 aa). 3 residues coordinate CoA: arginine 1761, lysine 2068, and arginine 2070. One can recognise a CoA carboxyltransferase C-terminal domain in the interval 1852-2178; that stretch reads PIDSPHRDIE…EEDKLKLIDK (327 aa).

Biotin is required as a cofactor. It depends on Mn(2+) as a cofactor.

It is found in the cytoplasm. It carries out the reaction hydrogencarbonate + acetyl-CoA + ATP = malonyl-CoA + ADP + phosphate + H(+). The catalysed reaction is N(6)-biotinyl-L-lysyl-[protein] + hydrogencarbonate + ATP = N(6)-carboxybiotinyl-L-lysyl-[protein] + ADP + phosphate + H(+). It functions in the pathway lipid metabolism; malonyl-CoA biosynthesis; malonyl-CoA from acetyl-CoA: step 1/1. Its function is as follows. Catalyzes the rate-limiting reaction in the biogenesis of long-chain fatty acids. Carries out three functions: biotin carboxyl carrier protein, biotin carboxylase and carboxyltransferase. This is Acetyl-CoA carboxylase (accA) from Dictyostelium discoideum (Social amoeba).